The sequence spans 114 residues: Acetyltransferase At1g77540 (114 aa).

An N-acetylthreonine modification is found at Thr2. The region spanning 18–106 (KIVWNEGKRR…RNPSWKPLIH (89 aa)) is the N-acetyltransferase domain. CoA contacts are provided by residues 52-55 (HTYV) and 61-66 (GLGLAS). Catalysis depends on Cys87, which acts as the Nucleophile. Residues 88–89 (SY), Thr93, and Arg97 contribute to the CoA site.

It is found in the peroxisome. Its function is as follows. Possesses in vitro histone acetyltransferase activity with histones H3 and H4. This chain is Acetyltransferase At1g77540, found in Arabidopsis thaliana (Mouse-ear cress).